A 358-amino-acid polypeptide reads, in one-letter code: uncharacterized protein (358 aa).

It belongs to the methyltransferase superfamily.

This is an uncharacterized protein from Mycobacterium tuberculosis (strain CDC 1551 / Oshkosh).